We begin with the raw amino-acid sequence, 907 residues long: Protein translocase subunit SecA (907 aa).

Residues Gln87, 105 to 109 (GEGKT), and Asp513 each bind ATP. A compositionally biased stretch (basic and acidic residues) spans 841-853 (EAQRRAQAEEAAR). The disordered stretch occupies residues 841–907 (EAQRRAQAEE…KYKQCHGQIN (67 aa)). Residues 854-865 (RAQAQHASAQSQ) show a composition bias toward low complexity. Basic and acidic residues predominate over residues 872–887 (EGHHQPVVRDERKVGR). Zn(2+) contacts are provided by Cys891, Cys893, Cys902, and His903.

This sequence belongs to the SecA family. Monomer and homodimer. Part of the essential Sec protein translocation apparatus which comprises SecA, SecYEG and auxiliary proteins SecDF-YajC and YidC. Zn(2+) is required as a cofactor.

The protein resides in the cell inner membrane. The protein localises to the cytoplasm. The enzyme catalyses ATP + H2O + cellular proteinSide 1 = ADP + phosphate + cellular proteinSide 2.. Part of the Sec protein translocase complex. Interacts with the SecYEG preprotein conducting channel. Has a central role in coupling the hydrolysis of ATP to the transfer of proteins into and across the cell membrane, serving both as a receptor for the preprotein-SecB complex and as an ATP-driven molecular motor driving the stepwise translocation of polypeptide chains across the membrane. This is Protein translocase subunit SecA from Vibrio vulnificus (strain CMCP6).